We begin with the raw amino-acid sequence, 2430 residues long: DNA-directed RNA polymerase subunit beta'' (2430 aa).

Positions 336, 455, 462, and 465 each coordinate Zn(2+).

It belongs to the RNA polymerase beta' chain family. RpoC2 subfamily. In plastids the minimal PEP RNA polymerase catalytic core is composed of four subunits: alpha, beta, beta', and beta''. When a (nuclear-encoded) sigma factor is associated with the core the holoenzyme is formed, which can initiate transcription. Requires Zn(2+) as cofactor.

It localises to the plastid. The protein localises to the chloroplast. It carries out the reaction RNA(n) + a ribonucleoside 5'-triphosphate = RNA(n+1) + diphosphate. Functionally, DNA-dependent RNA polymerase catalyzes the transcription of DNA into RNA using the four ribonucleoside triphosphates as substrates. This Stigeoclonium helveticum (Green alga) protein is DNA-directed RNA polymerase subunit beta''.